A 375-amino-acid polypeptide reads, in one-letter code: 23S rRNA (uracil(747)-C(5))-methyltransferase RlmC (375 aa).

Residues Cys-3, Cys-11, Cys-14, and Cys-87 each contribute to the [4Fe-4S] cluster site. Residues Gln-212, Phe-241, Glu-262, and Asn-307 each contribute to the S-adenosyl-L-methionine site. The active-site Nucleophile is Cys-334.

This sequence belongs to the class I-like SAM-binding methyltransferase superfamily. RNA M5U methyltransferase family. RlmC subfamily.

The catalysed reaction is uridine(747) in 23S rRNA + S-adenosyl-L-methionine = 5-methyluridine(747) in 23S rRNA + S-adenosyl-L-homocysteine + H(+). Functionally, catalyzes the formation of 5-methyl-uridine at position 747 (m5U747) in 23S rRNA. The chain is 23S rRNA (uracil(747)-C(5))-methyltransferase RlmC from Salmonella paratyphi A (strain ATCC 9150 / SARB42).